A 151-amino-acid chain; its full sequence is Small ribosomal subunit protein uS15 (151 aa).

The protein belongs to the universal ribosomal protein uS15 family.

This Wuchereria bancrofti protein is Small ribosomal subunit protein uS15 (RPS13).